A 302-amino-acid polypeptide reads, in one-letter code: N(G),N(G)-dimethylarginine dimethylaminohydrolase (302 aa).

The substrate site is built by aspartate 102, arginine 127, and arginine 172. Histidine 201 (proton donor) is an active-site residue. The active-site Nucleophile is cysteine 295.

It belongs to the DDAH family.

The catalysed reaction is N(omega),N(omega)-dimethyl-L-arginine + H2O = dimethylamine + L-citrulline. It carries out the reaction N(omega)-methyl-L-arginine + H2O = L-citrulline + methylamine. Hydrolyzes N(G),N(G)-dimethyl-L-arginine (ADMA) and N(G)-monomethyl-L-arginine (MMA). The sequence is that of N(G),N(G)-dimethylarginine dimethylaminohydrolase from Mycobacterium tuberculosis (strain ATCC 25618 / H37Rv).